The sequence spans 509 residues: MGSRSRARQVAAALGFVGLLLAALGAVMIVMVPSIIKQQVLKNVRIDPSSLSFNMWKEIPVPFYLSVYFFDVINPNEILQGQKPQVRERGPYVYREFRHKSNITFNDNDTVSFLEYRSYQFQPHKSRGLESDYIVIPNILVLSASVMMEDRPMSLKLIMTFAFSALGERAFVNRTVGEIMWGYEDPLIHLINKYFPNMFPFKGKFGLFAELNNSDSGLFTVFTGVKDFSRIHLVDKWNGLSKVNFWHSDQCNMINGTSGQMWAPFMTPESSLEFYSPEACRSMKLIYKEQGVFEGIPTFRFVAPNTLFANGSVYPPNEGFCPCMESGIQNVSTCRFNAPLFLSHPHFYNADPVLAEAVSGLHPNTEEHSLFLDIHPVTGIPMNCSVKLQLSLYIKSVKGIGQTGKIEPVVLPLLWFAESGAMEGETLQTFYTQLVLMPKVLHYAQYVLLALGCVLLFIPIVYQIRSQEKCYLFWSSSKKGSKDKEAIQAYSESLMTPAPKGTVLQEARL.

Residues 1–11 (MGSRSRARQVA) lie on the Cytoplasmic side of the membrane. Residues 12 to 32 (AALGFVGLLLAALGAVMIVMV) form a helical membrane-spanning segment. Residues 33–439 (PSIIKQQVLK…FYTQLVLMPK (407 aa)) lie on the Extracellular side of the membrane. N-linked (GlcNAc...) asparagine glycans are attached at residues asparagine 102, asparagine 108, asparagine 173, asparagine 212, asparagine 255, asparagine 310, asparagine 330, and asparagine 383. Cysteine 251 and cysteine 384 are disulfide-bonded. Residues 440–460 (VLHYAQYVLLALGCVLLFIPI) form a helical membrane-spanning segment. At 461–509 (VYQIRSQEKCYLFWSSSKKGSKDKEAIQAYSESLMTPAPKGTVLQEARL) the chain is on the cytoplasmic side.

It belongs to the CD36 family. As to quaternary structure, the C-terminal region binds to PDZK1. In terms of processing, N-glycosylated. The six cysteines of the extracellular domain are all involved in intramolecular disulfide bonds.

It is found in the cell membrane. The protein localises to the membrane. The protein resides in the caveola. Its function is as follows. Receptor for different ligands such as phospholipids, cholesterol ester, lipoproteins, phosphatidylserine and apoptotic cells. Receptor for HDL, mediating selective uptake of cholesteryl ether and HDL-dependent cholesterol efflux. Also facilitates the flux of free and esterified cholesterol between the cell surface and apoB-containing lipoproteins and modified lipoproteins, although less efficiently than HDL. May be involved in the phagocytosis of apoptotic cells, via its phosphatidylserine binding activity. The polypeptide is Scavenger receptor class B member 1 (SCARB1) (Sus scrofa (Pig)).